The following is a 327-amino-acid chain: tRNA uridine(34) hydroxylase (327 aa).

The 95-residue stretch at 130–224 (LDEDTVVLDT…YGKDPEVQGE (95 aa)) folds into the Rhodanese domain. The Cysteine persulfide intermediate role is filled by Cys184.

Belongs to the TrhO family.

It carries out the reaction uridine(34) in tRNA + AH2 + O2 = 5-hydroxyuridine(34) in tRNA + A + H2O. Its function is as follows. Catalyzes oxygen-dependent 5-hydroxyuridine (ho5U) modification at position 34 in tRNAs. This is tRNA uridine(34) hydroxylase from Streptococcus thermophilus (strain CNRZ 1066).